The sequence spans 119 residues: MLSNIIPLSIGAALGATARWLLNLAVPAAMSPATGNLFANWTGALLIGIFAETVNHPQWKLLLITGFLGSLTTLSGFSLETVTLLQSNRPASALSNIFLHTAGSLLLTWLGLKIGTAVK.

Transmembrane regions (helical) follow at residues leucine 37–valine 54, leucine 61–threonine 83, and alanine 93–leucine 112. Positions 69 and 72 each coordinate Na(+).

Belongs to the fluoride channel Fluc/FEX (TC 1.A.43) family.

The protein localises to the cell inner membrane. The enzyme catalyses fluoride(in) = fluoride(out). Na(+) is not transported, but it plays an essential structural role and its presence is essential for fluoride channel function. In terms of biological role, fluoride-specific ion channel. Important for reducing fluoride concentration in the cell, thus reducing its toxicity. This Neisseria meningitidis serogroup C (strain 053442) protein is Fluoride-specific ion channel FluC.